Reading from the N-terminus, the 286-residue chain is Putative chaperone BssE (286 aa).

ATP-binding positions include 47–54 (GKQGCGKS) and 108–115 (GCVIHLEE).

It belongs to the CbbQ/NirQ/NorQ/GpvN family.

May have a role in assembly and/or activation of benzylsuccinate synthase. The chain is Putative chaperone BssE (bssE) from Thauera aromatica.